The sequence spans 194 residues: Large ribosomal subunit protein bL9 (194 aa).

This sequence belongs to the bacterial ribosomal protein bL9 family.

Its function is as follows. Binds to the 23S rRNA. In Paracoccus denitrificans (strain Pd 1222), this protein is Large ribosomal subunit protein bL9.